Consider the following 174-residue polypeptide: Flavodoxin (174 aa).

Residues 4-165 form the Flavodoxin-like domain; that stretch reads VGLFYGSDTG…RVEKWCKQIY (162 aa).

The protein belongs to the flavodoxin family. The cofactor is FMN.

In terms of biological role, low-potential electron donor to a number of redox enzymes. The sequence is that of Flavodoxin (fldA) from Haemophilus influenzae (strain ATCC 51907 / DSM 11121 / KW20 / Rd).